The following is a 290-amino-acid chain: uncharacterized protein (290 aa).

The next 5 helical transmembrane spans lie at 14–34 (ALLN…IGIL), 82–102 (ISSL…LIGG), 115–135 (NLIA…IYLY), 158–174 (DAFV…SSQL), and 176–196 (LPWV…KTAW).

Belongs to the cation diffusion facilitator (CDF) transporter (TC 2.A.4) family.

Its subcellular location is the cell membrane. This is an uncharacterized protein from Bacillus subtilis (strain 168).